A 475-amino-acid chain; its full sequence is MAAATVLGRLSLIPNLSSKPKLKSNRRTTSTSVSVRAQASFSDPFVLQLAESLEDSLSASPSSSLPLQRIRDSSAETLLSTPWPSRKDEPFRFTDTSLIRSSQIEPISTQQRNSEILDNLTETQFTNAVIIDGFVSNLTIGPSDLPDGVYFGKYSGLPDELTNRISEFIGNFDSGDLFWSINGMGAPDLMVIYVPEGCKVENPIYLRYFSGETGDRESKRLPVSNPRVFVLVEEGGEIGIVEEFVGKDEEGFYWTNPVLEVVVQKNAKLKHSYLQKESMASAHIKWTFVRQEAESEYELVEVSTGGKLGRHNVHVQQLGPDTLTELTTFHMCVNEQTLDLHSKIILDHPRGASRQLHKCIVAHSSGQAVFDGNVRVNRFAQQTNAGQLTRSLLLKPRATVNIKPNLQIIADDVKCSHGAAISDLEEDQLFYFQARGIDLETARRALISSFGSEVIEKFPNREIRDQARNHVKGLL.

The transit peptide at 1–36 (MAAATVLGRLSLIPNLSSKPKLKSNRRTTSTSVSVR) directs the protein to the chloroplast.

In terms of assembly, interacts with NAP7.

Its subcellular location is the plastid. It localises to the chloroplast. This chain is Protein ABCI7, chloroplastic (ABCI7), found in Arabidopsis thaliana (Mouse-ear cress).